Reading from the N-terminus, the 2400-residue chain is Retinitis pigmentosa 1-like 1 protein (2400 aa).

2 Doublecortin domains span residues 34-118 (KKIT…GPGR) and 152-231 (RRIL…PAMK). 6 disordered regions span residues 104-152 (CSDK…KTPR), 230-310 (MKNA…DDMK), 444-1064 (GRER…DREA), 1188-1251 (AMTE…GDLE), 1275-1501 (EAER…GAAE), and 1697-2400 (RGEH…DLDF). Residues 242–251 (SGLTSRNKNG) are compositionally biased toward polar residues. Pro residues predominate over residues 277 to 287 (RPGPSNPPVGP). A compositionally biased stretch (polar residues) spans 450–460 (QDSASPASSTG). 2 stretches are compositionally biased toward low complexity: residues 530-543 (GASS…GSHE) and 573-584 (DPASPALSLSSL). The span at 591–601 (AETQGQGTEQA) shows a compositional bias: polar residues. 2 stretches are compositionally biased toward low complexity: residues 625 to 637 (SSTP…SQQG) and 645 to 654 (ASAMSSPSSP). The span at 661–670 (PRGHPRHSHY) shows a compositional bias: basic residues. 2 stretches are compositionally biased toward polar residues: residues 711 to 740 (TRTQ…SATV) and 825 to 835 (CCSQPGTQPAQ). 3 stretches are compositionally biased toward low complexity: residues 864–880 (QRRS…HQST), 903–921 (PNSG…GSRG), and 941–953 (SGVS…RSSP). Polar residues-rich tracts occupy residues 1223–1238 (LVTQ…SNQR) and 1285–1299 (ASSN…TVQE). The stretch at 1292–1307 (LAENTVQEEVQLEETK) is one 1-1; approximate repeat. The 3 X 16 AA approximate tandem repeats of T-E-E-G-L-Q-E-E-G-V-Q-L-E-E-T-K stretch occupies residues 1292 to 1342 (LAENTVQEEVQLEETKEGTEGEGLQEEAVQLEETKTEEGLQEEGVQLEETK). The 1-2; approximate repeat unit spans residues 1310 to 1326 (TEGEGLQEEAVQLEETK). The 1-3 repeat unit spans residues 1327–1342 (TEEGLQEEGVQLEETK). Over residues 1346–1363 (GEGQQEEEAQLEEIEETG) the composition is skewed to acidic residues. Residues 1434–1445 (RASASAEPCPAE) are compositionally biased toward low complexity. Polar residues-rich tracts occupy residues 1460 to 1472 (TDPS…SGSQ) and 1489 to 1501 (EHTQ…GAAE). Residues 1726–1736 (AEGGLGPGLSQ) are compositionally biased toward gly residues. Composition is skewed to basic and acidic residues over residues 1752–1762 (LNRDKDPKLGE) and 1769–1778 (AQEREGKTHN). 3 consecutive repeat copies span residues 1836 to 1851 (EAPE…SEGV), 1852 to 1867 (EAPE…EGEA), and 1875 to 1890 (EAPE…SEDV). 2 stretches are compositionally biased toward acidic residues: residues 1836 to 1909 (EAPE…AEAP) and 1920 to 1948 (ESVE…EAAQ). The tract at residues 1836 to 2244 (EAPEAEGEAQ…GEAQPESEGE (409 aa)) is 25 X 16 AA approximate tandem repeats of [ED]-[AT]-[PQ]-[ED]-[AVT]-E-[GKE]-[ED]-[AMT]-Q-[EPK]-[EAT]-[TSELP]-[EG]-[EGSQDI]-[AVIE]. Residues 1891 to 1906 (ETPEAEWEVQPESEGA) form a 2-4; approximate repeat. A 2-5 repeat occupies 1907–1921 (EAPEAEKEAQPETES). One copy of the 2-6; approximate repeat lies at 1923-1938 (EALETEGEDEPESEGA). Residues 1934 to 2017 (ESEGAEAQEA…EMQEAEEEAQ (84 aa)) are a coiled coil. A 2-7 repeat occupies 1939-1954 (EAQEAEEAAQEAEGQT). The span at 1949 to 1958 (EAEGQTQPES) shows a compositional bias: low complexity. Residues 1955–1970 (QPESEVIESQEAEEEA) form a 2-8; approximate repeat. Acidic residues-rich tracts occupy residues 1959–2022 (EVIE…ESDG), 2048–2075 (AQPE…QEAE), 2083–2108 (EDVD…EAEG), and 2117–2245 (EAPE…EGET). The 2-9; approximate repeat unit spans residues 1971–1984 (QPESEDVEALEVEV). Tandem repeats lie at residues 1985-2000 (ETQE…SEDV) and 2001-2016 (EAPE…EEEA). The stretch at 2017–2031 (QPESDGVEAQPKSEG) is one 2-12; approximate repeat. Residues 2033–2048 (EAQEVEGETQKTEGDA) form a 2-13d repeat. Residues 2054-2081 (GVEAPEAEEEAQEAEGEVQEAEGEAHPE) adopt a coiled-coil conformation. The stretch at 2056–2071 (EAPEAEEEAQEAEGEV) is one 2-14 repeat. One copy of the 2-15; approximate repeat lies at 2072–2085 (QEAEGEAHPESEDV). A run of 10 repeats spans residues 2086 to 2101 (DAQE…SEGV), 2102 to 2116 (EAPE…AEGI), 2117 to 2132 (EAPE…SEGI), 2133 to 2148 (EAPE…SEGV), 2149 to 2164 (EAQD…SEGI), 2165 to 2180 (EAQE…LEGV), 2181 to 2196 (EAPE…SEGI), 2197 to 2212 (EAPE…LEGV), 2213 to 2228 (EAPE…PEGV), and 2229 to 2244 (ETPE…SEGE). Polar residues predominate over residues 2292 to 2308 (PGSQTGPSSSRASSWGN). A compositionally biased stretch (basic and acidic residues) spans 2312–2327 (KDSENDHVLGDTRSPD).

Interacts with RP1; has a synergistic effect with RP1 in photoreceptor differentiation. Retinal-specific; expressed in photoreceptor.

It localises to the cytoplasm. Its subcellular location is the cytoskeleton. It is found in the cilium axoneme. The protein resides in the cell projection. The protein localises to the cilium. It localises to the photoreceptor outer segment. In terms of biological role, required for the differentiation of photoreceptor cells. Plays a role in the organization of outer segment of rod and cone photoreceptors. The protein is Retinitis pigmentosa 1-like 1 protein (RP1L1) of Homo sapiens (Human).